The following is a 283-amino-acid chain: Thymidylate synthase (283 aa).

Arg22 contacts dUMP. The active-site Nucleophile is Cys160. Residues Arg180 to Asp183, Asn191, and His221 to Tyr223 contribute to the dUMP site. Position 183 (Asp183) interacts with (6R)-5,10-methylene-5,6,7,8-tetrahydrofolate. Ser282 contributes to the (6R)-5,10-methylene-5,6,7,8-tetrahydrofolate binding site.

The protein belongs to the thymidylate synthase family. Bacterial-type ThyA subfamily. As to quaternary structure, homodimer.

The protein resides in the cytoplasm. The enzyme catalyses dUMP + (6R)-5,10-methylene-5,6,7,8-tetrahydrofolate = 7,8-dihydrofolate + dTMP. It functions in the pathway pyrimidine metabolism; dTTP biosynthesis. In terms of biological role, catalyzes the reductive methylation of 2'-deoxyuridine-5'-monophosphate (dUMP) to 2'-deoxythymidine-5'-monophosphate (dTMP) while utilizing 5,10-methylenetetrahydrofolate (mTHF) as the methyl donor and reductant in the reaction, yielding dihydrofolate (DHF) as a by-product. This enzymatic reaction provides an intracellular de novo source of dTMP, an essential precursor for DNA biosynthesis. This is Thymidylate synthase from Histophilus somni (strain 129Pt) (Haemophilus somnus).